The chain runs to 86 residues: MANIKSQMKRIKTNEANRQRNKAVKSSLKTAIRKFREAADAGDKAKAVELQATAGRALDKAVSKGVIHSNQAANKKSAMAKRANQL.

The tract at residues 1-25 (MANIKSQMKRIKTNEANRQRNKAVK) is disordered.

This sequence belongs to the bacterial ribosomal protein bS20 family.

In terms of biological role, binds directly to 16S ribosomal RNA. This Saccharopolyspora erythraea (strain ATCC 11635 / DSM 40517 / JCM 4748 / NBRC 13426 / NCIMB 8594 / NRRL 2338) protein is Small ribosomal subunit protein bS20.